A 269-amino-acid polypeptide reads, in one-letter code: 4-hydroxy-tetrahydrodipicolinate reductase (269 aa).

Residues 10-15 (GANGRM), glutamate 36, 99-101 (GTT), and 123-126 (AANF) contribute to the NAD(+) site. Histidine 156 functions as the Proton donor/acceptor in the catalytic mechanism. Histidine 157 is a (S)-2,3,4,5-tetrahydrodipicolinate binding site. Lysine 160 acts as the Proton donor in catalysis. 166–167 (GT) lines the (S)-2,3,4,5-tetrahydrodipicolinate pocket.

This sequence belongs to the DapB family.

Its subcellular location is the cytoplasm. The catalysed reaction is (S)-2,3,4,5-tetrahydrodipicolinate + NAD(+) + H2O = (2S,4S)-4-hydroxy-2,3,4,5-tetrahydrodipicolinate + NADH + H(+). It carries out the reaction (S)-2,3,4,5-tetrahydrodipicolinate + NADP(+) + H2O = (2S,4S)-4-hydroxy-2,3,4,5-tetrahydrodipicolinate + NADPH + H(+). Its pathway is amino-acid biosynthesis; L-lysine biosynthesis via DAP pathway; (S)-tetrahydrodipicolinate from L-aspartate: step 4/4. Catalyzes the conversion of 4-hydroxy-tetrahydrodipicolinate (HTPA) to tetrahydrodipicolinate. This Neisseria gonorrhoeae (strain ATCC 700825 / FA 1090) protein is 4-hydroxy-tetrahydrodipicolinate reductase.